Consider the following 190-residue polypeptide: uncharacterized protein (190 aa).

Positions 1 to 28 (MEFSLQYITIFIFVILFLIGLFSSKSRS) are cleaved as a signal peptide.

This is an uncharacterized protein from Haemophilus influenzae (strain ATCC 51907 / DSM 11121 / KW20 / Rd).